The primary structure comprises 327 residues: Tetraacyldisaccharide 4'-kinase (327 aa).

52–59 (TLGGAGKT) is a binding site for ATP.

It belongs to the LpxK family.

The catalysed reaction is a lipid A disaccharide + ATP = a lipid IVA + ADP + H(+). The protein operates within glycolipid biosynthesis; lipid IV(A) biosynthesis; lipid IV(A) from (3R)-3-hydroxytetradecanoyl-[acyl-carrier-protein] and UDP-N-acetyl-alpha-D-glucosamine: step 6/6. Functionally, transfers the gamma-phosphate of ATP to the 4'-position of a tetraacyldisaccharide 1-phosphate intermediate (termed DS-1-P) to form tetraacyldisaccharide 1,4'-bis-phosphate (lipid IVA). The sequence is that of Tetraacyldisaccharide 4'-kinase from Methylorubrum extorquens (strain PA1) (Methylobacterium extorquens).